A 521-amino-acid chain; its full sequence is Pentatricopeptide repeat-containing protein At4g26680, mitochondrial (521 aa).

A mitochondrion-targeting transit peptide spans 1 to 38 (MIRISIGVNRRLRYQFSSFAGYSGSENPRLFKTLGAAN). PPR repeat units lie at residues 167–201 (TPRVFDSLFKTFAHLKKFRNATDTFMQMKDYGFLP), 202–236 (TVESCNAYMSSLLGQGRVDIALRFYREMRRCKISP), 237–271 (NPYTLNMVMSGYCRSGKLDKGIELLQDMERLGFRA), 272–306 (TDVSYNTLIAGHCEKGLLSSALKLKNMMGKSGLQP), 307–341 (NVVTFNTLIHGFCRAMKLQEASKVFGEMKAVNVAP), 342–376 (NTVTYNTLINGYSQQGDHEMAFRFYEDMVCNGIQR), 377–411 (DILTYNALIFGLCKQAKTRKAAQFVKELDKENLVP), 412–446 (NSSTFSALIMGQCVRKNADRGFELYKSMIRSGCHP), 447–481 (NEQTFNMLVSAFCRNEDFDGASQVLREMVRRSIPL), and 482–516 (DSRTVHQVCNGLKHQGKDQLVKKLLQEMEGKKFLQ).

This sequence belongs to the PPR family. P subfamily.

The protein localises to the mitochondrion. The polypeptide is Pentatricopeptide repeat-containing protein At4g26680, mitochondrial (Arabidopsis thaliana (Mouse-ear cress)).